Consider the following 109-residue polypeptide: MKMKLLQVHFVLLVSSSFLLGYTGMVTAAILSRPQVVFVEDTCRENEIFSQCQASPNCEKSCDNIDIWESVPCIQTKSCVSGCICEDGYVRDKNQGVCILENSCPRVRH.

The signal sequence occupies residues 1 to 28 (MKMKLLQVHFVLLVSSSFLLGYTGMVTA). 5 disulfide bridges follow: Cys43-Cys83, Cys52-Cys79, Cys58-Cys73, Cys62-Cys104, and Cys85-Cys98. Positions 43–104 (CRENEIFSQC…QGVCILENSC (62 aa)) constitute a TIL domain.

This sequence belongs to the serine protease inhibitor-like (TIL domain-containing) family. In terms of tissue distribution, ubiquitously expressed (at protein level), including in venom glands. Found more precisely in the epidermis, fat body, gut, muscle, and venom of worker bees.

It is found in the secreted. Its function is as follows. Dual role peptide that functions as a broad-spectrum antimicrobial peptide and antifibrinolytic toxin. Inhibits trypsin (IC(50)=375 nM), plasmin (IC(50)=2140 nM), and microbial serine proteases (subtilisin A (IC(50)=294 nM) and proteinase K (IC(50)=459 nM)). Exhibits antifibrinolytic activity by binding and inhibiting plasmin. Does not inhibit chymotrypsin, elastase or thrombin. Binds to microbial cell wall carbohydrates (LPS, mannan and N-acetyl-D-glucosamine) and shows antimicrobial activity (MIC=4.1 uM against B.thuringiensis, MIC=4.95 uM against E.coli, MIC=9.6 uM against the fungus B.bassiana). Does not show hemolytic activity. This chain is Serine protease inhibitor, found in Bombus ignitus (Bumblebee).